We begin with the raw amino-acid sequence, 226 residues long: Uridylate kinase (226 aa).

Residue 6 to 10 (KISGK) participates in ATP binding. Gly-43 lines the UMP pocket. Gly-44 and Arg-48 together coordinate ATP. UMP contacts are provided by residues Asp-65 and 113–119 (FQPGQST). Thr-139, Asn-140, Tyr-145, and Asp-148 together coordinate ATP.

The protein belongs to the UMP kinase family. In terms of assembly, homohexamer.

It localises to the cytoplasm. It catalyses the reaction UMP + ATP = UDP + ADP. It participates in pyrimidine metabolism; CTP biosynthesis via de novo pathway; UDP from UMP (UMPK route): step 1/1. With respect to regulation, inhibited by UTP. Functionally, catalyzes the reversible phosphorylation of UMP to UDP. This Saccharolobus islandicus (strain Y.N.15.51 / Yellowstone #2) (Sulfolobus islandicus) protein is Uridylate kinase.